Reading from the N-terminus, the 154-residue chain is Large ribosomal subunit protein uL13 (154 aa).

The protein belongs to the universal ribosomal protein uL13 family. As to quaternary structure, part of the 50S ribosomal subunit.

Functionally, this protein is one of the early assembly proteins of the 50S ribosomal subunit, although it is not seen to bind rRNA by itself. It is important during the early stages of 50S assembly. This chain is Large ribosomal subunit protein uL13, found in Cereibacter sphaeroides (strain ATCC 17025 / ATH 2.4.3) (Rhodobacter sphaeroides).